We begin with the raw amino-acid sequence, 206 residues long: Ribonuclease M5 (206 aa).

The 84-residue stretch at 8–91 folds into the Toprim domain; the sequence is NEVIVVEGRD…AFLNRDEARP (84 aa). Mg(2+) is bound by residues Glu14, Asp60, and Asp62.

It belongs to the ribonuclease M5 family. The cofactor is Mg(2+).

It is found in the cytoplasm. It catalyses the reaction Endonucleolytic cleavage of RNA, removing 21 and 42 nucleotides, respectively, from the 5'- and 3'-termini of a 5S-rRNA precursor.. In terms of biological role, required for correct processing of both the 5' and 3' ends of 5S rRNA precursor. Cleaves both sides of a double-stranded region yielding mature 5S rRNA in one step. This is Ribonuclease M5 from Lactococcus lactis subsp. lactis (strain IL1403) (Streptococcus lactis).